The following is a 687-amino-acid chain: MKPPLNMSRSNKPLTQEANSSAHIDRAHQLAQDFNSKQDDTALTSLPHKNPDIFRFENNITAHSSRRGSLYRDSDATVVLPLSEHTPRLSMDDPYRQLLQQAEISQLRSKKKRHSSRVLRTSFISFVVLVSSLSGLDQGLISGNVMTLSFQKYFHYPLTSPLGNIVSIVNLGAFMASLFVYSGILEPCSRKKMLQISTMIYSLGAIVQVLALNQWCLLLGRFLLGVGMGFAFSMVIIYQFEFPLPCIRKRTLISIQCVSSVIAYSFGIWINCAFRYLGFAWRYPLSTHVALGIILNLMSFYLILESPSWLLKQKNDVEALVLISNVFDDGNFEENQTQLKFRVLKRDILLKSHLQKNSYPYAYILKDFSSIIKLLIGFQLLTRTNGVDAFLYYSPLILQQMGRGERKSIYLTGLNALIYSIVILAYVPLVLRKRKEKTNVLLGSIVMCALLFTISFTDWFPKSTTRYISILFAVFLFTHFISWDSIGWVMTIELLPHLSQAPVILLVSNFYWIFKWFVSLITPILIDRLSWKFYLIPSLSSFISIIFVLKIFPIETRDERLDSDDDSTGNGSGNHDDVFDDTGSEFSSSPSFSAYQINTLGSSIKQNNQAYSSIQNEQILPKNGNLSNQTHGSAQNVYFITSDSGPSRTGEFFSFHNRTDPNISDNIAANKPSSGGGQNSPGDMAVA.

The segment at 1–22 is disordered; it reads MKPPLNMSRSNKPLTQEANSSA. The Extracellular segment spans residues 1 to 122; sequence MKPPLNMSRS…RHSSRVLRTS (122 aa). The segment covering 7-22 has biased composition (polar residues); the sequence is MSRSNKPLTQEANSSA. Serine 90 bears the Phosphoserine mark. Residues 123 to 143 traverse the membrane as a helical segment; the sequence is FISFVVLVSSLSGLDQGLISG. Over 144–164 the chain is Cytoplasmic; sequence NVMTLSFQKYFHYPLTSPLGN. Residues 165 to 185 traverse the membrane as a helical segment; it reads IVSIVNLGAFMASLFVYSGIL. Residues 186 to 192 lie on the Extracellular side of the membrane; sequence EPCSRKK. The helical transmembrane segment at 193 to 213 threads the bilayer; it reads MLQISTMIYSLGAIVQVLALN. Residues 214 to 216 are Cytoplasmic-facing; that stretch reads QWC. Residues 217 to 237 traverse the membrane as a helical segment; sequence LLLGRFLLGVGMGFAFSMVII. Residues 238 to 251 lie on the Extracellular side of the membrane; that stretch reads YQFEFPLPCIRKRT. A helical membrane pass occupies residues 252–272; sequence LISIQCVSSVIAYSFGIWINC. Over 273–283 the chain is Cytoplasmic; the sequence is AFRYLGFAWRY. The chain crosses the membrane as a helical span at residues 284–304; the sequence is PLSTHVALGIILNLMSFYLIL. The Extracellular segment spans residues 305-410; the sequence is ESPSWLLKQK…MGRGERKSIY (106 aa). The chain crosses the membrane as a helical span at residues 411 to 431; sequence LTGLNALIYSIVILAYVPLVL. Topologically, residues 432 to 439 are cytoplasmic; the sequence is RKRKEKTN. Residues 440-460 traverse the membrane as a helical segment; that stretch reads VLLGSIVMCALLFTISFTDWF. The Extracellular portion of the chain corresponds to 461–469; the sequence is PKSTTRYIS. The chain crosses the membrane as a helical span at residues 470–490; the sequence is ILFAVFLFTHFISWDSIGWVM. Residues 491-500 lie on the Cytoplasmic side of the membrane; sequence TIELLPHLSQ. The chain crosses the membrane as a helical span at residues 501–521; the sequence is APVILLVSNFYWIFKWFVSLI. Residues 522–533 lie on the Extracellular side of the membrane; it reads TPILIDRLSWKF. Residues 534 to 554 traverse the membrane as a helical segment; the sequence is YLIPSLSSFISIIFVLKIFPI. At 555–687 the chain is on the cytoplasmic side; the sequence is ETRDERLDSD…QNSPGDMAVA (133 aa). 2 disordered regions span residues 561 to 587 and 654 to 687; these read LDSDDDSTGNGSGNHDDVFDDTGSEFS and SFHNRTDPNISDNIAANKPSSGGGQNSPGDMAVA. A compositionally biased stretch (polar residues) spans 660 to 673; it reads DPNISDNIAANKPS.

This sequence belongs to the major facilitator superfamily. Sugar transporter (TC 2.A.1.1) family.

The protein localises to the membrane. In Saccharomyces cerevisiae (strain ATCC 204508 / S288c) (Baker's yeast), this protein is Putative metabolite transport protein YDL199C.